A 174-amino-acid polypeptide reads, in one-letter code: Co-chaperone protein HscB homolog (174 aa).

The J domain occupies 2-74 (NYFELFKFSP…IRRAEHMLSL (73 aa)).

Belongs to the HscB family. In terms of assembly, interacts with HscA and stimulates its ATPase activity.

In terms of biological role, co-chaperone involved in the maturation of iron-sulfur cluster-containing proteins. Seems to help targeting proteins to be folded toward HscA. The sequence is that of Co-chaperone protein HscB homolog from Shewanella sp. (strain MR-4).